The chain runs to 119 residues: HTH-type transcriptional regulator SarX (119 aa).

The H-T-H motif DNA-binding region spans 55 to 78 (LKTAMDELDLSRTKLLVSIRRLIE).

The protein belongs to the SarA family.

It localises to the cytoplasm. Involved in the regulation of virulence genes. Acts as a repressor of the agr locus and consequently targets genes regulated by the agr system such as sspA, hla and hlb. Binds directly to the agr promoter region. This is HTH-type transcriptional regulator SarX (sarX) from Staphylococcus aureus (strain bovine RF122 / ET3-1).